The primary structure comprises 122 residues: Large ribosomal subunit protein uL14 (122 aa).

The protein belongs to the universal ribosomal protein uL14 family. As to quaternary structure, part of the 50S ribosomal subunit. Forms a cluster with proteins L3 and L19. In the 70S ribosome, L14 and L19 interact and together make contacts with the 16S rRNA in bridges B5 and B8.

Its function is as follows. Binds to 23S rRNA. Forms part of two intersubunit bridges in the 70S ribosome. The polypeptide is Large ribosomal subunit protein uL14 (Kineococcus radiotolerans (strain ATCC BAA-149 / DSM 14245 / SRS30216)).